Reading from the N-terminus, the 92-residue chain is Small ribosomal subunit protein bS18 (92 aa).

Belongs to the bacterial ribosomal protein bS18 family. As to quaternary structure, part of the 30S ribosomal subunit. Forms a tight heterodimer with protein bS6.

In terms of biological role, binds as a heterodimer with protein bS6 to the central domain of the 16S rRNA, where it helps stabilize the platform of the 30S subunit. This is Small ribosomal subunit protein bS18 from Cupriavidus taiwanensis (strain DSM 17343 / BCRC 17206 / CCUG 44338 / CIP 107171 / LMG 19424 / R1) (Ralstonia taiwanensis (strain LMG 19424)).